A 206-amino-acid chain; its full sequence is Thymidylate kinase (206 aa).

11–18 (GIDGAGKT) contacts ATP.

The protein belongs to the thymidylate kinase family.

It carries out the reaction dTMP + ATP = dTDP + ADP. Functionally, phosphorylation of dTMP to form dTDP in both de novo and salvage pathways of dTTP synthesis. This is Thymidylate kinase from Paraburkholderia phytofirmans (strain DSM 17436 / LMG 22146 / PsJN) (Burkholderia phytofirmans).